Reading from the N-terminus, the 231-residue chain is Large ribosomal subunit protein uL1 (231 aa).

This sequence belongs to the universal ribosomal protein uL1 family. In terms of assembly, part of the 50S ribosomal subunit.

Functionally, binds directly to 23S rRNA. The L1 stalk is quite mobile in the ribosome, and is involved in E site tRNA release. Its function is as follows. Protein L1 is also a translational repressor protein, it controls the translation of the L11 operon by binding to its mRNA. The polypeptide is Large ribosomal subunit protein uL1 (Janthinobacterium sp. (strain Marseille) (Minibacterium massiliensis)).